A 53-amino-acid chain; its full sequence is Sec-independent protein translocase protein TatA (53 aa).

The helical transmembrane segment at 1 to 21 (MGMSFSHLLIVLLIIFVLFGA) threads the bilayer.

Belongs to the TatA/E family. In terms of assembly, the Tat system comprises two distinct complexes: a TatABC complex, containing multiple copies of TatA, TatB and TatC subunits, and a separate TatA complex, containing only TatA subunits. Substrates initially bind to the TatABC complex, which probably triggers association of the separate TatA complex to form the active translocon.

It is found in the cell inner membrane. Its function is as follows. Part of the twin-arginine translocation (Tat) system that transports large folded proteins containing a characteristic twin-arginine motif in their signal peptide across membranes. TatA could form the protein-conducting channel of the Tat system. The polypeptide is Sec-independent protein translocase protein TatA (Rickettsia rickettsii (strain Iowa)).